Reading from the N-terminus, the 287-residue chain is MNTVKTVRELRAAIARARGEGKRIGFVPTMGNLHSGHAALVTKAAQRADFVVASIFVNPLQFGANEDLDKYPRTLAADQERLLQAGCNLLFAPTVEEMYPDGMAVQTRVSVPNLSEGLCGASRPGHFEGVATVVSKLFNMVQPDLAVFGEKDYQQLAVIRAMVRDLNMPIQIIGEPTVRAEDGLALSSRNGYLTAEQRATAPVVYRTLQQIGDAISRGQRDFAALVADGQAQLAAAGLRPDYLQVRHALTLRPAMVDDRDLVILVAAYLGNTRLIDNLYVHLDEKTA.

30 to 37 (MGNLHSGH) is a binding site for ATP. The active-site Proton donor is the histidine 37. Glutamine 61 provides a ligand contact to (R)-pantoate. Glutamine 61 is a binding site for beta-alanine. 149-152 (GEKD) serves as a coordination point for ATP. Position 155 (glutamine 155) interacts with (R)-pantoate. Residues valine 178 and 186–189 (LSSR) contribute to the ATP site.

Belongs to the pantothenate synthetase family. In terms of assembly, homodimer.

The protein localises to the cytoplasm. It carries out the reaction (R)-pantoate + beta-alanine + ATP = (R)-pantothenate + AMP + diphosphate + H(+). It participates in cofactor biosynthesis; (R)-pantothenate biosynthesis; (R)-pantothenate from (R)-pantoate and beta-alanine: step 1/1. Catalyzes the condensation of pantoate with beta-alanine in an ATP-dependent reaction via a pantoyl-adenylate intermediate. The polypeptide is Pantothenate synthetase (Pseudomonas putida (strain W619)).